The chain runs to 210 residues: 23 kDa jasmonate-induced protein (210 aa).

It belongs to the jasmonate-induced protein family.

This is 23 kDa jasmonate-induced protein from Hordeum vulgare (Barley).